Here is a 294-residue protein sequence, read N- to C-terminus: 4-hydroxy-tetrahydrodipicolinate synthase (294 aa).

Threonine 44 is a binding site for pyruvate. Catalysis depends on tyrosine 132, which acts as the Proton donor/acceptor. Lysine 160 functions as the Schiff-base intermediate with substrate in the catalytic mechanism. Residue isoleucine 205 participates in pyruvate binding.

The protein belongs to the DapA family. In terms of assembly, homotetramer; dimer of dimers.

It localises to the cytoplasm. The enzyme catalyses L-aspartate 4-semialdehyde + pyruvate = (2S,4S)-4-hydroxy-2,3,4,5-tetrahydrodipicolinate + H2O + H(+). It functions in the pathway amino-acid biosynthesis; L-lysine biosynthesis via DAP pathway; (S)-tetrahydrodipicolinate from L-aspartate: step 3/4. Catalyzes the condensation of (S)-aspartate-beta-semialdehyde [(S)-ASA] and pyruvate to 4-hydroxy-tetrahydrodipicolinate (HTPA). The polypeptide is 4-hydroxy-tetrahydrodipicolinate synthase (Kosmotoga olearia (strain ATCC BAA-1733 / DSM 21960 / TBF 19.5.1)).